A 579-amino-acid polypeptide reads, in one-letter code: Glypican-2 (579 aa).

Residues 1–23 form the signal peptide; sequence MSALRPLLLLLLPLCPGPGPGPG. O-linked (Xyl...) (heparan sulfate) serine glycans are attached at residues serine 55, serine 92, and serine 155. Disordered stretches follow at residues 444 to 468 and 485 to 555; these read GGSP…VPTR and ALGH…RSGG. 2 O-linked (Xyl...) (heparan sulfate) serine glycosylation sites follow: serine 500 and serine 502. Positions 520–529 are enriched in pro residues; the sequence is PARPPRPPYP. Residue glycine 554 is the site of GPI-anchor amidated glycine attachment. Positions 555–579 are cleaved as a propeptide — removed in mature form; the sequence is GASIGFHTQTILILSLSALALLGPR.

The protein belongs to the glypican family. As to quaternary structure, interacts (via heparan sulfate) with PTN; this interaction promotes neurite outgrowth through binding of PTN with chondroitin sulfate of proteoglycans, thereby releasing PTPRS of chondroitin sulfate proteoglycans (CSPGs) and leading to binding with heparan sulfate of GPC2. Interacts (heparan sulfate chain) with MDK; this interaction is inhibited by heparin followed by chondroitin sulfate E; this interaction induces GPC2 clustering through heparan sulfate chain; this interaction induces neuronal cell adhesion and neurite outgrowth.

It localises to the cell membrane. The protein resides in the secreted. It is found in the extracellular space. Cell surface proteoglycan that bears heparan sulfate. May fulfill a function related to the motile behaviors of developing neurons. This is Glypican-2 (GPC2) from Homo sapiens (Human).